A 233-amino-acid chain; its full sequence is Ribonuclease 3 (233 aa).

The RNase III domain maps to 4-126 (LNKLMERLGH…IVGAIYIDAG (123 aa)). Glutamate 39 contributes to the Mg(2+) binding site. Residue aspartate 43 is part of the active site. Aspartate 112 and glutamate 115 together coordinate Mg(2+). The active site involves glutamate 115. Residues 153–222 (DAKSLLQEWL…AKRFLELLDD (70 aa)) enclose the DRBM domain.

The protein belongs to the ribonuclease III family. In terms of assembly, homodimer. Mg(2+) serves as cofactor.

The protein localises to the cytoplasm. It carries out the reaction Endonucleolytic cleavage to 5'-phosphomonoester.. Its function is as follows. Digests double-stranded RNA. Involved in the processing of primary rRNA transcript to yield the immediate precursors to the large and small rRNAs (23S and 16S). Processes some mRNAs, and tRNAs when they are encoded in the rRNA operon. Processes pre-crRNA and tracrRNA of type II CRISPR loci if present in the organism. The protein is Ribonuclease 3 of Coxiella burnetii (strain RSA 331 / Henzerling II).